We begin with the raw amino-acid sequence, 112 residues long: DNA-binding protein TK1278 (112 aa).

It belongs to the PDCD5 family.

The protein is DNA-binding protein TK1278 of Thermococcus kodakarensis (strain ATCC BAA-918 / JCM 12380 / KOD1) (Pyrococcus kodakaraensis (strain KOD1)).